The following is a 333-amino-acid chain: Tetraacyldisaccharide 4'-kinase (333 aa).

55–62 is a binding site for ATP; it reads SVGGNGKT.

This sequence belongs to the LpxK family.

It carries out the reaction a lipid A disaccharide + ATP = a lipid IVA + ADP + H(+). It participates in glycolipid biosynthesis; lipid IV(A) biosynthesis; lipid IV(A) from (3R)-3-hydroxytetradecanoyl-[acyl-carrier-protein] and UDP-N-acetyl-alpha-D-glucosamine: step 6/6. In terms of biological role, transfers the gamma-phosphate of ATP to the 4'-position of a tetraacyldisaccharide 1-phosphate intermediate (termed DS-1-P) to form tetraacyldisaccharide 1,4'-bis-phosphate (lipid IVA). This is Tetraacyldisaccharide 4'-kinase from Aeromonas hydrophila subsp. hydrophila (strain ATCC 7966 / DSM 30187 / BCRC 13018 / CCUG 14551 / JCM 1027 / KCTC 2358 / NCIMB 9240 / NCTC 8049).